The primary structure comprises 886 residues: MVWGTGYGNPSPLNPYGFASLHRGGLNPLILAPENITFDTLNTHNDHEETHGESPEVPKASIAPAGRQNVPVLQQNQENEDNHALGGSEDAKDEREIRFSAIKTLYNYYSEGPSTPIMPHLVNRLRGLDALAKIDATLTKVDMNAAYIFALRPTFPYSYGYKQRFSNRRLTTSALCYARTGLSSFLTVDKTYTSNSPLKGGSRGWPIFNVDVSSHVAEPHMRTLSPIGLEVFNLATSQFSKTLLTASSKVFTQSLYTADILSIFGEVFLPHVMQPVSNYTPILVRALLALIHILGPGSGNCSLSSSIFESSIPQFLTVSHSTNMSNRTRYCLHTRSAYKDMFRNGIPPQSTLPPTLAPEGSSARVLIPEALVTSPMFPWLLILVSSGPQFFLYSKDASINTVDIGSRGRITSPIPDVAKLDLHRLWNLFRFDGYRYIDVVIVGADRDYVWPYQNGVYVHGGKGPNGTGNYGNADVHDGIGTIFSSFNNNVNVQTSDLMLGLLTLWNHITTTYATEEEVTMAIKIAAAFALVYPVQPIVYSGCPKAFQRHTSYYQPSSENCYATDTAEVKSVWDTVELSVQVNNAMVLGMTLPFGQPTLSSAQWYNNIDKAEISMFKVGNLPLQNLDYLSLDMMEFYAPTTGQLYDIRSDNLILSAHRTVNLGIGYTALADFFAYLASVPAQSFYHDRMVTSPISKQTYSVYERFIERFIDDFVGWDRCDLFNLDTLLGAKHIAGVASSPIPWHCSLQRCPLPIIMHYTGLTFGQEHITVRDVAGVEGLQQIVMRDFQGRIVVERLGTAAPSRIAVKLDWSRLSAWYSDTTCAIPLSDRVMEIVNYAAIWDPTQERHAQVSCTHTLAPISFRALTCLSLYSIRVSTLHHLMTTRAKL.

M1 is subject to N-acetylmethionine; by host. The segment at 42-61 is disordered; that stretch reads NTHNDHEETHGESPEVPKAS. Residues 44–56 are compositionally biased toward basic and acidic residues; that stretch reads HNDHEETHGESPE.

It belongs to the totivirus major capsid protein family. Post-translationally, acetylation is necessary for viral assembly.

It localises to the virion. Capsid protein self-assembles to form an icosahedral capsid with a T=2 symmetry, 35 nm in diameter, and consisting of 60 capsid proteins asymmetric dimers. The capsid encapsulates the genomic dsRNA and the polymerase and remains intact following cell entry to protect the dsRNA from degradation and to prevent unfavorable antiviral responses in the host cell during all the replication cycle of the virus. Nascent transcripts are transcribed within the structural confines of the virion and are extruded into the cytoplasm. Functionally, binds and removes 5' cap structures from cellular mRNA. This chain is Major capsid protein (gag), found in Giardia lamblia virus (isolate Wang) (GLV).